Reading from the N-terminus, the 85-residue chain is UPF0434 protein HNE_3545 (85 aa).

It belongs to the UPF0434 family.

The sequence is that of UPF0434 protein HNE_3545 from Hyphomonas neptunium (strain ATCC 15444).